Here is a 180-residue protein sequence, read N- to C-terminus: Translation initiation factor IF-3 (180 aa).

Belongs to the IF-3 family. In terms of assembly, monomer.

It localises to the cytoplasm. In terms of biological role, IF-3 binds to the 30S ribosomal subunit and shifts the equilibrium between 70S ribosomes and their 50S and 30S subunits in favor of the free subunits, thus enhancing the availability of 30S subunits on which protein synthesis initiation begins. This is Translation initiation factor IF-3 from Shewanella baltica (strain OS223).